We begin with the raw amino-acid sequence, 221 residues long: Small ribosomal subunit protein uS3c (221 aa).

Residues 39 to 109 (LRDYLKTRLA…RVIVHVVEIA (71 aa)) enclose the KH type-2 domain.

It belongs to the universal ribosomal protein uS3 family. Part of the 30S ribosomal subunit.

Its subcellular location is the plastid. The protein resides in the chloroplast. This Nephroselmis olivacea (Green alga) protein is Small ribosomal subunit protein uS3c (rps3).